We begin with the raw amino-acid sequence, 308 residues long: Hydroxyacylglutathione hydrolase, mitochondrial (308 aa).

Residues 1 to 13 constitute a mitochondrion transit peptide; sequence MVLGRGLLGRRSL. 4 residues coordinate Zn(2+): H102, H104, D106, and H107. At K116 the chain carries N6-acetyllysine. H158 and D182 together coordinate Zn(2+). Substrate is bound by residues 191–193 and 221–223; these read KFY and HEY. H221 is a Zn(2+) binding site. The residue at position 229 (K229) is an N6-acetyllysine; alternate. Position 229 is an N6-succinyllysine; alternate (K229). Residue 297–300 coordinates substrate; that stretch reads RKEK.

Belongs to the metallo-beta-lactamase superfamily. Glyoxalase II family. In terms of assembly, monomer. It depends on Zn(2+) as a cofactor. In terms of tissue distribution, testis.

It localises to the mitochondrion matrix. It is found in the cytoplasm. It catalyses the reaction an S-(2-hydroxyacyl)glutathione + H2O = a 2-hydroxy carboxylate + glutathione + H(+). It carries out the reaction (R)-S-lactoylglutathione + H2O = (R)-lactate + glutathione + H(+). It functions in the pathway secondary metabolite metabolism; methylglyoxal degradation; (R)-lactate from methylglyoxal: step 2/2. Its function is as follows. Thiolesterase that catalyzes the hydrolysis of S-D-lactoyl-glutathione to form glutathione and D-lactic acid. The chain is Hydroxyacylglutathione hydrolase, mitochondrial (HAGH) from Macaca fascicularis (Crab-eating macaque).